Consider the following 583-residue polypeptide: Trehalase (583 aa).

Positions 1–23 (MPGRTWELCLLLLLGLGLGSQEA) are cleaved as a signal peptide. Residue N78 is glycosylated (N-linked (GlcNAc...) asparagine). Residues R168, 175-176 (WD), N212, and 221-223 (RSQ) contribute to the substrate site. N-linked (GlcNAc...) asparagine glycans are attached at residues N239 and N261. Residues 286 to 288 (RPE) and G319 contribute to the substrate site. The Proton donor/acceptor role is filled by D321. An N-linked (GlcNAc...) asparagine glycan is attached at N369. E514 (proton donor/acceptor) is an active-site residue. E529 is a binding site for substrate. Residue S556 is the site of GPI-anchor amidated serine attachment. Positions 557–583 (GAKLAFLEPHCLAATLLPSLLLSLLPW) are cleaved as a propeptide — removed in mature form.

Belongs to the glycosyl hydrolase 37 family. In terms of assembly, homodimer; disulfide-linked. Expressed in kidney, liver and small intestine. Also more weakly expressed in pancreas.

The protein localises to the cell membrane. The catalysed reaction is alpha,alpha-trehalose + H2O = alpha-D-glucose + beta-D-glucose. Its function is as follows. Intestinal trehalase is probably involved in the hydrolysis of ingested trehalose. In Homo sapiens (Human), this protein is Trehalase.